Here is a 740-residue protein sequence, read N- to C-terminus: Catalase-peroxidase (740 aa).

The segment at residues 102–229 (WHAAGTYRTG…LAAIQMGLIY (128 aa)) is a cross-link (tryptophyl-tyrosyl-methioninium (Trp-Tyr) (with M-256)). H103 functions as the Proton acceptor in the catalytic mechanism. Residues 111-130 (GDGRGGSSSGQQRFAPLNSW) are disordered. Positions 229-256 (YVNPEGPGGDPHDPEGMARDMRETFARM) form a cross-link, tryptophyl-tyrosyl-methioninium (Tyr-Met) (with W-102). H271 provides a ligand contact to heme b.

This sequence belongs to the peroxidase family. Peroxidase/catalase subfamily. In terms of assembly, homodimer or homotetramer. It depends on heme b as a cofactor. In terms of processing, formation of the three residue Trp-Tyr-Met cross-link is important for the catalase, but not the peroxidase activity of the enzyme.

It catalyses the reaction H2O2 + AH2 = A + 2 H2O. The catalysed reaction is 2 H2O2 = O2 + 2 H2O. Its function is as follows. Bifunctional enzyme with both catalase and broad-spectrum peroxidase activity. The chain is Catalase-peroxidase from Erythrobacter litoralis (strain HTCC2594).